The sequence spans 379 residues: Glutamate 5-kinase (379 aa).

Lys-14 contacts ATP. Residues Ser-54, Asp-141, and Asn-153 each contribute to the substrate site. ATP is bound by residues 173–174 and 215–221; these read TD and TGGMATK. The 79-residue stretch at 280-358 folds into the PUA domain; sequence KGRLLLDIGA…DEIEPLLGYD (79 aa).

It belongs to the glutamate 5-kinase family.

The protein localises to the cytoplasm. The catalysed reaction is L-glutamate + ATP = L-glutamyl 5-phosphate + ADP. It functions in the pathway amino-acid biosynthesis; L-proline biosynthesis; L-glutamate 5-semialdehyde from L-glutamate: step 1/2. Its function is as follows. Catalyzes the transfer of a phosphate group to glutamate to form L-glutamate 5-phosphate. The chain is Glutamate 5-kinase from Shewanella amazonensis (strain ATCC BAA-1098 / SB2B).